The sequence spans 311 residues: tRNA dimethylallyltransferase (311 aa).

An ATP-binding site is contributed by G14 to T21. T16–T21 is a binding site for substrate. The interaction with substrate tRNA stretch occupies residues D39–Q42.

It belongs to the IPP transferase family. As to quaternary structure, monomer. The cofactor is Mg(2+).

It catalyses the reaction adenosine(37) in tRNA + dimethylallyl diphosphate = N(6)-dimethylallyladenosine(37) in tRNA + diphosphate. Functionally, catalyzes the transfer of a dimethylallyl group onto the adenine at position 37 in tRNAs that read codons beginning with uridine, leading to the formation of N6-(dimethylallyl)adenosine (i(6)A). The chain is tRNA dimethylallyltransferase from Lactiplantibacillus plantarum (strain ATCC BAA-793 / NCIMB 8826 / WCFS1) (Lactobacillus plantarum).